Here is a 379-residue protein sequence, read N- to C-terminus: Queuine tRNA-ribosyltransferase (379 aa).

The active-site Proton acceptor is Asp96. Residues 96–100 (DSGGF), Asp150, Gln196, and Gly223 each bind substrate. The segment at 254-260 (GIGTPDY) is RNA binding. Asp273 acts as the Nucleophile in catalysis. Zn(2+) contacts are provided by Cys311, Cys313, Cys316, and His342.

This sequence belongs to the queuine tRNA-ribosyltransferase family. In terms of assembly, homodimer. Within each dimer, one monomer is responsible for RNA recognition and catalysis, while the other monomer binds to the replacement base PreQ1. Zn(2+) is required as a cofactor.

The catalysed reaction is 7-aminomethyl-7-carbaguanine + guanosine(34) in tRNA = 7-aminomethyl-7-carbaguanosine(34) in tRNA + guanine. It functions in the pathway tRNA modification; tRNA-queuosine biosynthesis. Functionally, catalyzes the base-exchange of a guanine (G) residue with the queuine precursor 7-aminomethyl-7-deazaguanine (PreQ1) at position 34 (anticodon wobble position) in tRNAs with GU(N) anticodons (tRNA-Asp, -Asn, -His and -Tyr). Catalysis occurs through a double-displacement mechanism. The nucleophile active site attacks the C1' of nucleotide 34 to detach the guanine base from the RNA, forming a covalent enzyme-RNA intermediate. The proton acceptor active site deprotonates the incoming PreQ1, allowing a nucleophilic attack on the C1' of the ribose to form the product. After dissociation, two additional enzymatic reactions on the tRNA convert PreQ1 to queuine (Q), resulting in the hypermodified nucleoside queuosine (7-(((4,5-cis-dihydroxy-2-cyclopenten-1-yl)amino)methyl)-7-deazaguanosine). The sequence is that of Queuine tRNA-ribosyltransferase from Treponema denticola (strain ATCC 35405 / DSM 14222 / CIP 103919 / JCM 8153 / KCTC 15104).